The sequence spans 199 residues: UPF0637 protein LVIS_1261 (199 aa).

The protein belongs to the UPF0637 family.

In Levilactobacillus brevis (strain ATCC 367 / BCRC 12310 / CIP 105137 / JCM 1170 / LMG 11437 / NCIMB 947 / NCTC 947) (Lactobacillus brevis), this protein is UPF0637 protein LVIS_1261.